The chain runs to 167 residues: MPLGKYYCDYCEKQFQDTPAARKRHLDGAQHHRARALWYDAVRRQELHGGGGGAPPLLHQPGAAAIGVCQHFVRTGTCKFGDSCRYFHPKPPPANPGPAPSGPVSGPMAQQSNIQGSQPNFVGYQAADGSSFSGNILGGHTSWGNLPPSLRPPPEGGYPPFPFVDWG.

Residues 63 to 91 (AAAIGVCQHFVRTGTCKFGDSCRYFHPKP) form a C3H1-type zinc finger. A compositionally biased stretch (pro residues) spans 89-101 (PKPPPANPGPAPS). Positions 89-167 (PKPPPANPGP…YPPFPFVDWG (79 aa)) are disordered. The segment covering 108–120 (MAQQSNIQGSQPN) has biased composition (polar residues). The segment covering 149–167 (SLRPPPEGGYPPFPFVDWG) has biased composition (pro residues).

This is Zinc finger CCCH domain-containing protein 3 from Oryza sativa subsp. japonica (Rice).